Reading from the N-terminus, the 1284-residue chain is ATP-dependent helicase fft2 (1284 aa).

2 stretches are compositionally biased toward polar residues: residues 1–10 (MLPYNSNYLS) and 20–57 (ENPQ…AMYG). 5 disordered regions span residues 1–57 (MLPY…AMYG), 185–252 (AQPP…LPPV), 317–339 (KQSP…QSQK), 353–388 (STQA…EEPE), and 446–465 (PDDV…KNPM). Residues 201-241 (RSNSRSSARSTARSAPRSTQRSRSSSANPVTTPPVNNTLLT) are compositionally biased toward low complexity. 2 stretches are compositionally biased toward polar residues: residues 320–339 (PVAS…QSQK) and 353–372 (STQA…ASKK). Ser323 is subject to Phosphoserine. Residues 376 to 388 (EEDEFYDSEEEPE) are compositionally biased toward acidic residues. Ser383 carries the phosphoserine modification. In terms of domain architecture, Helicase ATP-binding spans 562–730 (HLLYQQKLSG…VSLLAFILPN (169 aa)). 575–582 (DEMGLGKT) provides a ligand contact to ATP. Positions 681–684 (DEGH) match the DEGH box motif. Positions 816 to 839 (QQLRRDDKRNKRSKNDEESDGKSL) are disordered. Residues 818 to 831 (LRRDDKRNKRSKND) show a composition bias toward basic and acidic residues. In terms of domain architecture, Helicase C-terminal spans 928–1079 (VLKELLPKMK…SLSSDGKDRE (152 aa)). Positions 1088-1284 (DMLDEENNGN…SEVDNNAAKD (197 aa)) are disordered. Positions 1095 to 1107 (NGNNTKPEITGNE) are enriched in polar residues. Residues 1143 to 1177 (EKTDLADGDEKANIKTEMKSETVEGDNKELRETMK) are compositionally biased toward basic and acidic residues. Polar residues predominate over residues 1180-1194 (NVQTDSNAAVPSSKS). 2 stretches are compositionally biased toward basic and acidic residues: residues 1243-1256 (QLEK…KKPD) and 1266-1284 (EEEK…AAKD).

It belongs to the SNF2/RAD54 helicase family.

The protein localises to the cytoplasm. It localises to the nucleus. It catalyses the reaction ATP + H2O = ADP + phosphate + H(+). Functionally, DNA helicase that possesses intrinsic ATP-dependent nucleosome-remodeling activity and is required for heterochromatin organization. This is ATP-dependent helicase fft2 (fft2) from Schizosaccharomyces pombe (strain 972 / ATCC 24843) (Fission yeast).